Reading from the N-terminus, the 221-residue chain is Coiled-coil domain-containing protein 70 (221 aa).

A coiled-coil region spans residues 129 to 168 (NALWEKDRNLLQEDKALWEEEKALWVEERALLEEEKALWE).

This is Coiled-coil domain-containing protein 70 (CCDC70) from Macaca fascicularis (Crab-eating macaque).